Reading from the N-terminus, the 719-residue chain is Solute carrier organic anion transporter family member 6A1 (719 aa).

Residues 1–46 (MFVGVARHSGSQDEVSRGVEPLEAARAQPAKDRRAKGTPKSSKPGK) are disordered. Residues 1–106 (MFVGVARHSG…TCCECCNNIR (106 aa)) lie on the Cytoplasmic side of the membrane. A compositionally biased stretch (basic residues) spans 33 to 46 (RRAKGTPKSSKPGK). The helical transmembrane segment at 107 to 126 (CFMIFYCILLICQGVVFGLI) threads the bilayer. The Extracellular portion of the chain corresponds to 127-145 (DVSIGDFQKEYQLKTIEKL). The helical transmembrane segment at 146 to 166 (ALEKSYDISSGLVAIFIAFYG) threads the bilayer. The Cytoplasmic segment spans residues 167–171 (DRKKV). A helical transmembrane segment spans residues 172 to 196 (IWFVASSFLIGLGSLLCAFPSINEE). Topologically, residues 197–223 (NKQSKVGIEDICEEIKVVSGCQSSGIS) are extracellular. The chain crosses the membrane as a helical span at residues 224–254 (FQSKYLSFFILGQTVQGIAGMPLYILGITFI). The Cytoplasmic portion of the chain corresponds to 255 to 274 (DENVATHSAGIYLGIAECTS). Residues 275–295 (MIGYALGYVLGAPLVKVPENT) traverse the membrane as a helical segment. Residues 296–311 (TSATNTTVNNGSPEWL) are Extracellular-facing. N-linked (GlcNAc...) asparagine glycosylation occurs at N300. A helical membrane pass occupies residues 312-336 (WTWWINFLFAAVVAWCTLIPLSCFP). At 337 to 378 (NNMPGSTRIKARKRKQLHFFDSRLKDLKLGTNIKDLCAALWI) the chain is on the cytoplasmic side. A helical transmembrane segment spans residues 379–400 (LMKNPVLICLALSKATEYLVII). The Extracellular portion of the chain corresponds to 401–420 (GASEFLPIYLENQFILTPTV). A helical transmembrane segment spans residues 421–444 (ATTLAGLVLIPGGALGQLLGGVIV). Over 445-448 (STLE) the chain is Cytoplasmic. A helical membrane pass occupies residues 449-472 (MSCKALMRFIMVTSVISLILLVFI). Over 473-581 (IFVRCNPVQF…DAKCYKLPLF (109 aa)) the chain is Extracellular. In terms of domain architecture, Kazal-like spans 496 to 551 (GNLTAPCNEKCRCSSSIYSSICGRDDIEYFSPCFAGCTYSKAQNQKKMYYNCSCIK). The N-linked (GlcNAc...) asparagine glycan is linked to N497. Cystine bridges form between C502-C532, C508-C528, and C517-C549. Residue N546 is glycosylated (N-linked (GlcNAc...) asparagine). Residues 582 to 604 (IAFIFSTLIFSGFSGVPIVLAMT) form a helical membrane-spanning segment. Over 605-613 (RVVPDKLRS) the chain is Cytoplasmic. The helical transmembrane segment at 614 to 639 (LALGVSYVILRIFGTIPGPSIFKMSG) threads the bilayer. Residues 640–673 (ETSCILRDVNKCGHTGRCWIYNKTKMAFLLVGIC) are Extracellular-facing. N661 carries N-linked (GlcNAc...) asparagine glycosylation. Residues 674 to 691 (FLCKLCTIIFTTIAFFIY) traverse the membrane as a helical segment. At 692-719 (KRRLNENTDFPDVTVKNPKVKKKEETDL) the chain is on the cytoplasmic side.

Belongs to the organo anion transporter (TC 2.A.60) family. Strongly expressed in testis. Weakly expressed in spleen, brain, fetal brain and placenta. Detected in lung tumors.

It localises to the cell membrane. The chain is Solute carrier organic anion transporter family member 6A1 (SLCO6A1) from Homo sapiens (Human).